The chain runs to 587 residues: Arginine--tRNA ligase (587 aa).

The short motif at 127–137 is the 'HIGH' region element; that stretch reads PNLAKEMHVGH.

It belongs to the class-I aminoacyl-tRNA synthetase family. In terms of assembly, monomer.

The protein localises to the cytoplasm. The catalysed reaction is tRNA(Arg) + L-arginine + ATP = L-arginyl-tRNA(Arg) + AMP + diphosphate. The protein is Arginine--tRNA ligase of Pseudomonas aeruginosa (strain LESB58).